The chain runs to 307 residues: Methionyl-tRNA formyltransferase (307 aa).

Residue 108–111 (SLLP) participates in (6S)-5,6,7,8-tetrahydrofolate binding.

Belongs to the Fmt family.

The catalysed reaction is L-methionyl-tRNA(fMet) + (6R)-10-formyltetrahydrofolate = N-formyl-L-methionyl-tRNA(fMet) + (6S)-5,6,7,8-tetrahydrofolate + H(+). Functionally, attaches a formyl group to the free amino group of methionyl-tRNA(fMet). The formyl group appears to play a dual role in the initiator identity of N-formylmethionyl-tRNA by promoting its recognition by IF2 and preventing the misappropriation of this tRNA by the elongation apparatus. This chain is Methionyl-tRNA formyltransferase, found in Stenotrophomonas maltophilia (strain K279a).